A 282-amino-acid chain; its full sequence is MIVNCIDIANNILDKFKSDLEKLKKKKIIPHMAIVKINDDAASDKYVSIKLKKAAELGVKTTLISEGIKTQDDLIKQIHILNNDDSIDGYIIQLPLPKGFDSNVICEHIDVNKDIDGLSSFAISRNLANSNLFHPKPCTANGIIEILKQSNYSIEGKHAVIINRSMIVGKPLIGLFLENNATVTVCHTKTQNLKEMTKTADIVVVAIGKPDFLTKDMVNPNAFVIDAGISVVDGKVVGDAAKDLQEYVKYITPVPNGVGRLTVAMIFKNLMDLVKEKYNERI.

Residues 163–165 (NRS), Thr-188, and Ile-229 each bind NADP(+).

This sequence belongs to the tetrahydrofolate dehydrogenase/cyclohydrolase family. Homodimer.

It carries out the reaction (6R)-5,10-methylene-5,6,7,8-tetrahydrofolate + NADP(+) = (6R)-5,10-methenyltetrahydrofolate + NADPH. The catalysed reaction is (6R)-5,10-methenyltetrahydrofolate + H2O = (6R)-10-formyltetrahydrofolate + H(+). It functions in the pathway one-carbon metabolism; tetrahydrofolate interconversion. Catalyzes the oxidation of 5,10-methylenetetrahydrofolate to 5,10-methenyltetrahydrofolate and then the hydrolysis of 5,10-methenyltetrahydrofolate to 10-formyltetrahydrofolate. This is Bifunctional protein FolD from Malacoplasma penetrans (strain HF-2) (Mycoplasma penetrans).